Reading from the N-terminus, the 67-residue chain is Ceratotoxin-C (67 aa).

The N-terminal stretch at 1-23 (MANIKAVFLICIVAFIAFHCVVA) is a signal peptide. A propeptide spanning residues 24–35 (EPTAEDSVVVKR) is cleaved from the precursor.

Homomer of four to six subunits.

It localises to the secreted. Functionally, female-specific peptides with potent activity against Gram-positive and Gram-negative bacteria. They have as well hemolytic activity. The chain is Ceratotoxin-C (CTXC1) from Ceratitis capitata (Mediterranean fruit fly).